The following is a 503-amino-acid chain: ATP synthase subunit beta (503 aa).

Position 157 to 164 (157 to 164) interacts with ATP; that stretch reads GGAGVGKT.

Belongs to the ATPase alpha/beta chains family. As to quaternary structure, F-type ATPases have 2 components, CF(1) - the catalytic core - and CF(0) - the membrane proton channel. CF(1) has five subunits: alpha(3), beta(3), gamma(1), delta(1), epsilon(1). CF(0) has three main subunits: a(1), b(2) and c(9-12). The alpha and beta chains form an alternating ring which encloses part of the gamma chain. CF(1) is attached to CF(0) by a central stalk formed by the gamma and epsilon chains, while a peripheral stalk is formed by the delta and b chains.

It is found in the cell membrane. It catalyses the reaction ATP + H2O + 4 H(+)(in) = ADP + phosphate + 5 H(+)(out). Functionally, produces ATP from ADP in the presence of a proton gradient across the membrane. The catalytic sites are hosted primarily by the beta subunits. The sequence is that of ATP synthase subunit beta from Christiangramia forsetii (strain DSM 17595 / CGMCC 1.15422 / KT0803) (Gramella forsetii).